The primary structure comprises 121 residues: Ribonuclease P protein component (121 aa).

It belongs to the RnpA family. Consists of a catalytic RNA component (M1 or rnpB) and a protein subunit.

The enzyme catalyses Endonucleolytic cleavage of RNA, removing 5'-extranucleotides from tRNA precursor.. Functionally, RNaseP catalyzes the removal of the 5'-leader sequence from pre-tRNA to produce the mature 5'-terminus. It can also cleave other RNA substrates such as 4.5S RNA. The protein component plays an auxiliary but essential role in vivo by binding to the 5'-leader sequence and broadening the substrate specificity of the ribozyme. The polypeptide is Ribonuclease P protein component (Nitrosomonas eutropha (strain DSM 101675 / C91 / Nm57)).